A 154-amino-acid polypeptide reads, in one-letter code: 6,7-dimethyl-8-ribityllumazine synthase (154 aa).

5-amino-6-(D-ribitylamino)uracil-binding positions include phenylalanine 22, 56 to 58 (SFE), and 80 to 82 (AVI). 85–86 (ST) is a (2S)-2-hydroxy-3-oxobutyl phosphate binding site. Histidine 88 acts as the Proton donor in catalysis. Residue tyrosine 113 coordinates 5-amino-6-(D-ribitylamino)uracil. Arginine 127 serves as a coordination point for (2S)-2-hydroxy-3-oxobutyl phosphate.

It belongs to the DMRL synthase family. In terms of assembly, forms an icosahedral capsid composed of 60 subunits, arranged as a dodecamer of pentamers.

The catalysed reaction is (2S)-2-hydroxy-3-oxobutyl phosphate + 5-amino-6-(D-ribitylamino)uracil = 6,7-dimethyl-8-(1-D-ribityl)lumazine + phosphate + 2 H2O + H(+). Its pathway is cofactor biosynthesis; riboflavin biosynthesis; riboflavin from 2-hydroxy-3-oxobutyl phosphate and 5-amino-6-(D-ribitylamino)uracil: step 1/2. Catalyzes the formation of 6,7-dimethyl-8-ribityllumazine by condensation of 5-amino-6-(D-ribitylamino)uracil with 3,4-dihydroxy-2-butanone 4-phosphate. This is the penultimate step in the biosynthesis of riboflavin. This is 6,7-dimethyl-8-ribityllumazine synthase from Persephonella marina (strain DSM 14350 / EX-H1).